Consider the following 379-residue polypeptide: Homoserine O-succinyltransferase (379 aa).

One can recognise an AB hydrolase-1 domain in the interval 51-360 (NAVLICHALS…DAPQGHDAFL (310 aa)). S157 (nucleophile) is an active-site residue. R227 contacts substrate. Active-site residues include D323 and H356. Residue D357 participates in substrate binding.

Belongs to the AB hydrolase superfamily. MetX family. In terms of assembly, homodimer.

It is found in the cytoplasm. It carries out the reaction L-homoserine + succinyl-CoA = O-succinyl-L-homoserine + CoA. Its pathway is amino-acid biosynthesis; L-methionine biosynthesis via de novo pathway; O-succinyl-L-homoserine from L-homoserine: step 1/1. Its function is as follows. Transfers a succinyl group from succinyl-CoA to L-homoserine, forming succinyl-L-homoserine. The sequence is that of Homoserine O-succinyltransferase from Stutzerimonas stutzeri (strain A1501) (Pseudomonas stutzeri).